The sequence spans 232 residues: Large ribosomal subunit protein uL1 (232 aa).

Belongs to the universal ribosomal protein uL1 family. As to quaternary structure, part of the 50S ribosomal subunit.

Binds directly to 23S rRNA. The L1 stalk is quite mobile in the ribosome, and is involved in E site tRNA release. Functionally, protein L1 is also a translational repressor protein, it controls the translation of the L11 operon by binding to its mRNA. This is Large ribosomal subunit protein uL1 from Syntrophus aciditrophicus (strain SB).